Here is a 283-residue protein sequence, read N- to C-terminus: Large ribosomal subunit protein uL2 (283 aa).

Disordered regions lie at residues 34–53 and 224–283; these read TEPY…TARH and AMNP…KKKK. Residues 232–245 show a composition bias toward gly residues; it reads NGGGQGKSKGGGGW. Residues 256-268 are compositionally biased toward basic residues; sequence AKGKKTRHKRKNS.

The protein belongs to the universal ribosomal protein uL2 family. As to quaternary structure, part of the 50S ribosomal subunit. Forms a bridge to the 30S subunit in the 70S ribosome.

One of the primary rRNA binding proteins. Required for association of the 30S and 50S subunits to form the 70S ribosome, for tRNA binding and peptide bond formation. It has been suggested to have peptidyltransferase activity; this is somewhat controversial. Makes several contacts with the 16S rRNA in the 70S ribosome. The sequence is that of Large ribosomal subunit protein uL2 from Methylacidiphilum infernorum (isolate V4) (Methylokorus infernorum (strain V4)).